The following is a 471-amino-acid chain: Ubiquitin carboxyl-terminal hydrolase calypso (471 aa).

Positions 45–276 (GWLELESDPG…IRFNLMAVVP (232 aa)) constitute a UCH catalytic domain. Cys-131 serves as the catalytic Nucleophile. His-213 (proton donor) is an active-site residue. Coiled-coil stretches lie at residues 240 to 256 (WEDS…VMAE) and 298 to 324 (GTLQ…DTPT). Residues 307-326 (DEQGESGNGDSQRPDTPTTL) are disordered. Positions 314–326 (NGDSQRPDTPTTL) are enriched in polar residues. The region spanning 375–403 (NYDKFICTFLSMLAHQGVLGELVSQHLLP) is the ULD domain. Residues 405–471 (KKVSGQGAAN…KGRNKCRKRK (67 aa)) form a positively charged C-terminal tail required for binding nucleosomes region. Positions 412 to 471 (AANRISKQSTTASAGGSTAAGTASTPKTQQQQAAAAKNGKSPSKTPGRRRKGRNKCRKRK) are disordered. Low complexity predominate over residues 420–447 (STTASAGGSTAAGTASTPKTQQQQAAAA). Residues 457-471 (PGRRRKGRNKCRKRK) show a composition bias toward basic residues.

It belongs to the peptidase C12 family. BAP1 subfamily. Catalytic component of the polycomb repressive deubiquitinase (PR-DUB) complex, at least composed of caly/calypso, Asx and sba (MBD5/6 homolog). The PR-DUB complex associates with nucleosomes to mediate deubiquitination of histone H2AK118ub1 substrates; the association requires the positively charged C-terminal tail of caly, probably due to direct binding of DNA. Interacts (via ULD domain) with Asx (via DEUBAD domain); the interaction produces a stable heterodimer with a composite binding site for ubiquitin. Homodimerizes (via coiled-coil hinge-region between the UCH and ULD domains) to mediate assembly of 2 copies of the caly-Asx heterodimer into a bisymmetric tetramer; dimerization enhances PR-DUB association with nucleosomes.

The protein resides in the nucleus. The catalysed reaction is Thiol-dependent hydrolysis of ester, thioester, amide, peptide and isopeptide bonds formed by the C-terminal Gly of ubiquitin (a 76-residue protein attached to proteins as an intracellular targeting signal).. Its function is as follows. Catalytic component of the polycomb repressive deubiquitinase (PR-DUB) complex, a complex that specifically mediates deubiquitination of histone H2A monoubiquitinated at 'Lys-119' (H2AK118ub1). Mediates bisymmetric organization of the PR-DUB complex and is involved in association with nucleosomes to mediate deubiquitination. Does not deubiquitinate monoubiquitinated histone H2B. Required to maintain the transcriptionally repressive state of homeotic genes throughout development. The PR-DUB complex has weak or no activity toward 'Lys-48'- and 'Lys-63'-linked polyubiquitin chains. Polycomb group (PcG) protein. The sequence is that of Ubiquitin carboxyl-terminal hydrolase calypso from Drosophila melanogaster (Fruit fly).